Here is a 390-residue protein sequence, read N- to C-terminus: Phosphoglycerate kinase (390 aa).

Residues 21 to 23 (DMN), Arg36, 59 to 62 (HLGR), Arg113, and Arg146 contribute to the substrate site. ATP is bound by residues Lys197, Glu319, and 345-348 (GGDT).

Belongs to the phosphoglycerate kinase family. Monomer.

Its subcellular location is the cytoplasm. It carries out the reaction (2R)-3-phosphoglycerate + ATP = (2R)-3-phospho-glyceroyl phosphate + ADP. Its pathway is carbohydrate degradation; glycolysis; pyruvate from D-glyceraldehyde 3-phosphate: step 2/5. The protein is Phosphoglycerate kinase of Laribacter hongkongensis (strain HLHK9).